The following is a 1312-amino-acid chain: Retinoblastoma-like protein A (1312 aa).

Disordered stretches follow at residues 1–67, 168–231, 336–359, 536–611, 987–1023, 1168–1236, and 1249–1312; these read MMAH…NNEN, SSSS…KNSS, HNYN…NNNN, NNNN…IYGT, NNNN…NNNN, KKND…NNTE, and EESP…RLKS. Residues 10–67 are compositionally biased toward low complexity; the sequence is TNINTKTTAPTTTTTEQQPEQQQQQPEQQQQEKQNNNNNNNNNNNNNNNINNNENNEN. Positions 36 to 117 form a coiled coil; that stretch reads EQQQQEKQNN…TSSALNVDQD (82 aa). Residues 168 to 179 are compositionally biased toward polar residues; the sequence is SSSSFQPDNNSK. Basic residues predominate over residues 180–189; it reads IKGRKIRKTN. Residues 195–230 are a coiled coil; that stretch reads NNDSNEEEEETTTDTEEEEEEDTLLNENNNSINKNS. A compositionally biased stretch (acidic residues) spans 198–218; that stretch reads SNEEEEETTTDTEEEEEEDTL. Low complexity-rich tracts occupy residues 219-231, 337-359, and 536-595; these read LNEN…KNSS, NYNN…NNNN, and NNNN…SSSS. Composition is skewed to low complexity over residues 1185–1234, 1251–1275, and 1286–1305; these read NNNN…NNNN, SPST…NNNK, and SPSS…SSSG.

Belongs to the retinoblastoma protein (RB) family.

It localises to the nucleus. Its function is as follows. Key regulator of entry into cell division. Directly involved in heterochromatin formation by maintaining overall chromatin structure and, in particular, that of constitutive heterochromatin by stabilizing histone methylation. Controls histone H4 'Lys-20' trimethylation. Probably acts as a transcription repressor by recruiting chromatin-modifying enzymes to promoters. Plays a dual role, regulating cell-cycle progression and transcriptional events leading to terminal differentiation. In the absence of a G1 phase, functions in late G2 controlling the expression of both S-phase and mitotic genes. Controls stalk/spore preference by suppressing the DIF response in cells destined for the spore pathway. DIF is a chlorinated hydroxyphenone made by cells of spore pathway that promotes stalk differentiation. This chain is Retinoblastoma-like protein A, found in Dictyostelium discoideum (Social amoeba).